The primary structure comprises 103 residues: PTS system lactose-specific EIIA component (103 aa).

Positions 1 to 102 (MNREEVQLLG…MKHLLEFYKR (102 aa)) constitute a PTS EIIA type-3 domain. Residue His-78 is the Tele-phosphohistidine intermediate of the active site. The residue at position 78 (His-78) is a Phosphohistidine; by HPr. Asp-81 is a Mg(2+) binding site.

In terms of assembly, homotrimer. It depends on Mg(2+) as a cofactor.

It is found in the cytoplasm. The phosphoenolpyruvate-dependent sugar phosphotransferase system (sugar PTS), a major carbohydrate active transport system, catalyzes the phosphorylation of incoming sugar substrates concomitantly with their translocation across the cell membrane. The enzyme II LacEF PTS system is involved in lactose transport. In Staphylococcus aureus (strain COL), this protein is PTS system lactose-specific EIIA component.